Consider the following 576-residue polypeptide: Trehalase (576 aa).

The first 20 residues, Met-1 to Ala-20, serve as a signal peptide directing secretion. Asn-75 carries an N-linked (GlcNAc...) asparagine glycan. Substrate contacts are provided by residues Arg-165, Trp-172–Asp-173, Asn-209, and Arg-218–Gln-220. Asn-258 carries N-linked (GlcNAc...) asparagine glycosylation. Residues Arg-283–Glu-285 and Gly-316 contribute to the substrate site. The Proton donor/acceptor role is filled by Asp-318. Residue Asn-366 is glycosylated (N-linked (GlcNAc...) asparagine). The Proton donor/acceptor role is filled by Glu-511. Glu-526 is a binding site for substrate. A lipid anchor (GPI-anchor amidated serine) is attached at Ser-553. The propeptide at Gly-554–Gln-576 is removed in mature form.

It belongs to the glycosyl hydrolase 37 family. As to quaternary structure, homodimer; disulfide-linked.

It localises to the cell membrane. The catalysed reaction is alpha,alpha-trehalose + H2O = alpha-D-glucose + beta-D-glucose. Its function is as follows. Intestinal trehalase is probably involved in the hydrolysis of ingested trehalose. This chain is Trehalase, found in Mus musculus (Mouse).